Here is a 110-residue protein sequence, read N- to C-terminus: UPF0060 membrane protein Swit_0423 (110 aa).

A run of 4 helical transmembrane segments spans residues 6–26 (LFIF…FWAW), 29–49 (LGKS…FAWL), 61–81 (AFAA…WAVE), and 90–110 (LIGV…PRTA).

The protein belongs to the UPF0060 family.

Its subcellular location is the cell inner membrane. This is UPF0060 membrane protein Swit_0423 from Rhizorhabdus wittichii (strain DSM 6014 / CCUG 31198 / JCM 15750 / NBRC 105917 / EY 4224 / RW1) (Sphingomonas wittichii).